The chain runs to 404 residues: Voltage-gated potassium channel subunit beta-3 (404 aa).

Residues methionine 1–serine 14 show a composition bias toward polar residues. The tract at residues methionine 1–glycine 77 is disordered. The segment covering proline 28–glycine 50 has biased composition (gly residues). Residues threonine 97, tryptophan 98, glutamine 104, and aspartate 126 each coordinate NADP(+). Tyrosine 131 serves as the catalytic Proton donor/acceptor. NADP(+) contacts are provided by asparagine 199, serine 229, arginine 230, glutamine 255, tryptophan 284, proline 286, leucine 287, alanine 288, cysteine 289, lysine 295, arginine 305, glycine 364, serine 366, glutamine 370, and glutamate 373.

Belongs to the shaker potassium channel beta subunit family. As to quaternary structure, forms heteromultimeric complex with alpha subunits. Interacts with KCNA5 and KCNB2. Brain specific. Most prominent expression in cerebellum. Weaker signals detected in cortex, occipital lobe, frontal lobe and temporal lobe. Not detected in spinal cord, heart, lung, liver, kidney, pancreas, placenta and skeletal muscle.

Its subcellular location is the cytoplasm. Its function is as follows. Regulatory subunit of the voltage-gated potassium (Kv) channels composed of pore-forming and potassium-conducting alpha subunits and of regulatory beta subunit. The beta-3/KCNAB3 subunit may mediate closure of potassium channels. Increases inactivation of Kv1.5/KCNA5 alpha subunit-containing channels. May display nicotinamide adenine dinucleotide phosphate (NADPH)-dependent aldoketoreductase activity. The binding of oxidized and reduced NADP(H) cofactors may be required for the regulation of potassium channel activity. This Homo sapiens (Human) protein is Voltage-gated potassium channel subunit beta-3.